Consider the following 441-residue polypeptide: Ribosomal protein uS12 methylthiotransferase RimO (441 aa).

An MTTase N-terminal domain is found at 8–118 (PKIGFVSLGC…VLEHVHHYVP (111 aa)). [4Fe-4S] cluster contacts are provided by Cys17, Cys53, Cys82, Cys150, Cys154, and Cys157. A Radical SAM core domain is found at 136 to 373 (LTPRHYAYLK…MQLQQQISAE (238 aa)). The TRAM domain maps to 376-441 (QEKVGKEILV…DEYDLWGSRV (66 aa)).

This sequence belongs to the methylthiotransferase family. RimO subfamily. [4Fe-4S] cluster serves as cofactor.

The protein resides in the cytoplasm. It carries out the reaction L-aspartate(89)-[ribosomal protein uS12]-hydrogen + (sulfur carrier)-SH + AH2 + 2 S-adenosyl-L-methionine = 3-methylsulfanyl-L-aspartate(89)-[ribosomal protein uS12]-hydrogen + (sulfur carrier)-H + 5'-deoxyadenosine + L-methionine + A + S-adenosyl-L-homocysteine + 2 H(+). Catalyzes the methylthiolation of an aspartic acid residue of ribosomal protein uS12. In Escherichia fergusonii (strain ATCC 35469 / DSM 13698 / CCUG 18766 / IAM 14443 / JCM 21226 / LMG 7866 / NBRC 102419 / NCTC 12128 / CDC 0568-73), this protein is Ribosomal protein uS12 methylthiotransferase RimO.